An 80-amino-acid chain; its full sequence is MARLLVVSVGVFLAVIMLSSETMSLPAGENLPALTLFEAQNQLIGLSQEQRQCKKIGEHCYVADECCSKRCLFYAAKCVS.

An N-terminal signal peptide occupies residues 1–24; the sequence is MARLLVVSVGVFLAVIMLSSETMS. Residues 25–46 constitute a propeptide that is removed on maturation; that stretch reads LPAGENLPALTLFEAQNQLIGL. Intrachain disulfides connect C53–C67, C60–C71, and C66–C78.

This sequence belongs to the asilidin-1 family. Expressed by the venom gland.

Its subcellular location is the secreted. In terms of biological role, neurotoxin that may modulate ions channels (other than those tested). In vivo, induces neurotoxic effects when injected into insects (tested on L.cuprina and A.domesticus). The sequence is that of U-Asilidin(1)-Dg12 from Dolopus genitalis (Giant Australian assassin fly).